A 235-amino-acid chain; its full sequence is UPF0502 protein Bmul_3231/BMULJ_05293 (235 aa).

It belongs to the UPF0502 family.

The protein is UPF0502 protein Bmul_3231/BMULJ_05293 of Burkholderia multivorans (strain ATCC 17616 / 249).